We begin with the raw amino-acid sequence, 125 residues long: Large ribosomal subunit protein eL31 (125 aa).

This sequence belongs to the eukaryotic ribosomal protein eL31 family. As to quaternary structure, component of the large ribosomal subunit.

The protein localises to the cytoplasm. Component of the large ribosomal subunit. The ribosome is a large ribonucleoprotein complex responsible for the synthesis of proteins in the cell. This chain is Large ribosomal subunit protein eL31 (rpl31), found in Xenopus laevis (African clawed frog).